The sequence spans 276 residues: Rhomboid protease GlpG (276 aa).

The next 6 helical transmembrane spans lie at 94-114, 142-162, 169-189, 192-212, 229-249, and 250-270; these read GPVTWIVMLACVLVYIAMSLI, IFMHFSLMHILFNLLWWWYLG, LGSGKLIVITVISALLSGYVQ, FSGPWFGGLSGVVYALMGYVW, LIIFALLWIVAGWFDWFGMSM, and ANGAHIAGLIVGLAMAFVDTL. The active-site Nucleophile is the Ser201. Residue His254 is part of the active site.

Belongs to the peptidase S54 family.

The protein localises to the cell inner membrane. It catalyses the reaction Cleaves type-1 transmembrane domains using a catalytic dyad composed of serine and histidine that are contributed by different transmembrane domains.. Functionally, rhomboid-type serine protease that catalyzes intramembrane proteolysis. The sequence is that of Rhomboid protease GlpG from Salmonella dublin (strain CT_02021853).